The primary structure comprises 138 residues: Basic phospholipase A2 beta-bungarotoxin A-AL3 chain (138 aa).

The first 10 residues, 1-10 (LAVCVSLIGA), serve as a signal peptide directing secretion. Positions 11–18 (ANIPPQHL) are excised as a propeptide. 6 cysteine pairs are disulfide-bonded: C45-C137, C47-C63, C62-C118, C69-C111, C79-C104, and C97-C109. Positions 46, 48, and 50 each coordinate Ca(2+). Residue H66 is part of the active site. D67 lines the Ca(2+) pocket. Residue D112 is part of the active site.

This sequence belongs to the phospholipase A2 family. Group I subfamily. D49 sub-subfamily. As to quaternary structure, heterodimer; disulfide-linked. The A chains have phospholipase A2 activity and the B chains show homology with the basic protease inhibitors. It depends on Ca(2+) as a cofactor. Expressed by the venom gland.

The protein resides in the secreted. The enzyme catalyses a 1,2-diacyl-sn-glycero-3-phosphocholine + H2O = a 1-acyl-sn-glycero-3-phosphocholine + a fatty acid + H(+). Its function is as follows. Snake venom phospholipase A2 (PLA2) that inhibits neuromuscular transmission by blocking acetylcholine release from the nerve termini. PLA2 catalyzes the calcium-dependent hydrolysis of the 2-acyl groups in 3-sn-phosphoglycerides. The chain is Basic phospholipase A2 beta-bungarotoxin A-AL3 chain from Bungarus multicinctus (Many-banded krait).